Consider the following 835-residue polypeptide: MGDTELELSPTHLEELQKSPSTSTTSSLSLPSSPSSGPHPLTSSSPSTSEGLPTSSPPLDVISEGLGELSLVIDTEVAKKACQEVLQKVKFLKGDGEVSSASSEPILANGTAHPEANDGGQPPKISEEEVEPIKSVRRRQKNNSSKQSWLLRLFESKLFDISMAISYLYNSKEPGVQAYIGNRLFSFRNEDVDFYLPQLLNMYIHMDEDVGDAIKPYVVYRCRQSINFSLQCAWLLGAYSSDMHISTQRHSRGTKLRKLILSDELKPSSQRIRREVPQPPPPYPPPLHHGPGMSEHSLSPSKRTHQRSKSDATVSISLSSNLKRTASNPKVETSQDEPVRLTPQREFIKSLMGIGKRLATLPTKEQKTQRLISELSLLNHKLPARVWLPTAAFDHHVVRVPHTQAVVLNSKDKAPYLIYVEVLECENFETSSVPVRIPETQIRSTRSVENLPDCGITPDQRASSFSTVPNYDNDDEAWSVDDIGELQVELPEIHTNSCDNISQFSVDSITSQESKEPIFIAAGDIRRRLSEQLAHTPTTFRKDPEDPSAVALKEPWQEKVRRIREGSPYGHLPNWRLLSVIVKCGDDLRQELLAYQVLKQLQIIWEQERVPLWIKPYKILVISSDSGMIEPVVNAVSIHQVKKQSQLLLLDYFRQEHGNFNTEEFLTAQRNFVQSCAGYCLICYLLQVKDRHNGNILLDSEGHIIHIDFGFILSSSPRNLGFETSAFKLTSEFVDVMGGLDGDMFNYYKMLMLQGLIAARKHMEKVIQIVEIMQQGSQLPCFHGSSTIRNLKERFHMNLTEEQLQVLVEQMVDGSMRSITTKLYDGFQYLTNGIM.

Disordered regions lie at residues 1-61, 99-139, and 267-341; these read MGDT…PLDV, SSAS…VRRR, and PSSQ…PVRL. A compositionally biased stretch (low complexity) spans 19–59; it reads SPSTSTTSSLSLPSSPSSGPHPLTSSSPSTSEGLPTSSPPL. The PIK helical domain occupies 59-262; the sequence is LDVISEGLGE…GTKLRKLILS (204 aa). Composition is skewed to basic and acidic residues over residues 125 to 134 and 267 to 276; these read ISEEEVEPIK and PSSQRIRREV. The span at 277–288 shows a compositional bias: pro residues; sequence PQPPPPYPPPLH. Residues 311-332 are compositionally biased toward polar residues; that stretch reads DATVSISLSSNLKRTASNPKVE. Positions 554 to 820 constitute a PI3K/PI4K catalytic domain; it reads EPWQEKVRRI…MVDGSMRSIT (267 aa). Residues 560 to 566 are G-loop; that stretch reads VRRIREG. A catalytic loop region spans residues 687-695; sequence QVKDRHNGN. Residues 706-730 are activation loop; sequence HIDFGFILSSSPRNLGFETSAFKLT.

The protein belongs to the PI3/PI4-kinase family. Type III PI4K subfamily. The cofactor is Mg(2+). It depends on Mn(2+) as a cofactor. As to expression, expressed in the inner ear otic vesicles.

Its subcellular location is the endomembrane system. It localises to the mitochondrion outer membrane. The protein localises to the rough endoplasmic reticulum membrane. It catalyses the reaction a 1,2-diacyl-sn-glycero-3-phospho-(1D-myo-inositol) + ATP = a 1,2-diacyl-sn-glycero-3-phospho-(1D-myo-inositol 4-phosphate) + ADP + H(+). In terms of biological role, phosphorylates phosphatidylinositol (PI) in the first committed step in the production of the second messenger inositol-1,4,5,-trisphosphate (PIP). May play an important role the in inner ear development. This chain is Phosphatidylinositol 4-kinase beta (pi4kb), found in Danio rerio (Zebrafish).